Reading from the N-terminus, the 238-residue chain is Pyridoxine 5'-phosphate synthase (238 aa).

N7 serves as a coordination point for 3-amino-2-oxopropyl phosphate. 9 to 10 (DH) provides a ligand contact to 1-deoxy-D-xylulose 5-phosphate. Position 18 (R18) interacts with 3-amino-2-oxopropyl phosphate. The active-site Proton acceptor is the H43. Positions 45 and 50 each coordinate 1-deoxy-D-xylulose 5-phosphate. E70 (proton acceptor) is an active-site residue. T100 provides a ligand contact to 1-deoxy-D-xylulose 5-phosphate. The Proton donor role is filled by H190. 3-amino-2-oxopropyl phosphate is bound by residues G191 and 212–213 (GH).

It belongs to the PNP synthase family. In terms of assembly, homooctamer; tetramer of dimers.

It is found in the cytoplasm. The catalysed reaction is 3-amino-2-oxopropyl phosphate + 1-deoxy-D-xylulose 5-phosphate = pyridoxine 5'-phosphate + phosphate + 2 H2O + H(+). The protein operates within cofactor biosynthesis; pyridoxine 5'-phosphate biosynthesis; pyridoxine 5'-phosphate from D-erythrose 4-phosphate: step 5/5. Functionally, catalyzes the complicated ring closure reaction between the two acyclic compounds 1-deoxy-D-xylulose-5-phosphate (DXP) and 3-amino-2-oxopropyl phosphate (1-amino-acetone-3-phosphate or AAP) to form pyridoxine 5'-phosphate (PNP) and inorganic phosphate. The sequence is that of Pyridoxine 5'-phosphate synthase from Prochlorococcus marinus subsp. pastoris (strain CCMP1986 / NIES-2087 / MED4).